Consider the following 418-residue polypeptide: Putative competence-damage inducible protein (418 aa).

The protein belongs to the CinA family.

The sequence is that of Putative competence-damage inducible protein from Streptococcus pneumoniae serotype 19F (strain G54).